A 318-amino-acid polypeptide reads, in one-letter code: Methionyl-tRNA formyltransferase (318 aa).

(6S)-5,6,7,8-tetrahydrofolate is bound at residue 112-115 (SILP).

Belongs to the Fmt family.

The catalysed reaction is L-methionyl-tRNA(fMet) + (6R)-10-formyltetrahydrofolate = N-formyl-L-methionyl-tRNA(fMet) + (6S)-5,6,7,8-tetrahydrofolate + H(+). Functionally, attaches a formyl group to the free amino group of methionyl-tRNA(fMet). The formyl group appears to play a dual role in the initiator identity of N-formylmethionyl-tRNA by promoting its recognition by IF2 and preventing the misappropriation of this tRNA by the elongation apparatus. This is Methionyl-tRNA formyltransferase from Shewanella baltica (strain OS155 / ATCC BAA-1091).